The primary structure comprises 331 residues: uncharacterized protein (331 aa).

7 Pentapeptide repeat domains span residues leucine 20–glutamine 59, alanine 60–aspartate 99, serine 100–glutamine 139, alanine 151–lysine 190, alanine 191–glutamate 230, alanine 231–arginine 270, and alanine 271–serine 310.

This is an uncharacterized protein from Synechocystis sp. (strain ATCC 27184 / PCC 6803 / Kazusa).